The primary structure comprises 328 residues: L-asparaginase (328 aa).

The Asparaginase/glutaminase domain occupies 1–320; it reads MKLLVLGTGG…EEIRKIMERN (320 aa). The Nucleophile; O-isoaspartyl threonine intermediate role is filled by Thr-11. L-aspartate-binding residues include Thr-11, Asp-53, Ser-54, Thr-85, and Asp-86. Residues Thr-85, Asp-86, Lys-156, and Tyr-274 each act as charge relay system in the active site.

This sequence belongs to the asparaginase 1 family. As to quaternary structure, homodimer.

It carries out the reaction L-asparagine + H2O = L-aspartate + NH4(+). Its activity is regulated as follows. Chohan et al. found that divalent metal ions and EDTA do not have any significant effect on enzyme activity, indicating that activity is independent of metal ions. In another study, Hong et al. showed that activity is enhanced by Mg(2+), significantly inhibited by Co(2+) and Ni(2+), and moderately inhibited by Ca(2+), Cu(2+) and EDTA. Unfolding studies suggest that urea cannot induce complete unfolding and inactivation of the enzyme even at a concentration 8 M. However, in the presence of 4 M guanidine hydrochloride, the enzyme structure is unfolded with complete loss of enzyme activity. Functionally, catalyzes the hydrolysis of L-asparagine into L-aspartate and ammonia. Also displays D-asparaginase activity, which is about 50% of the L-asparaginase activity. Does not exhibit glutaminase activity. In Thermococcus kodakarensis (strain ATCC BAA-918 / JCM 12380 / KOD1) (Pyrococcus kodakaraensis (strain KOD1)), this protein is L-asparaginase.